The following is a 452-amino-acid chain: Keratin, type II cytoskeletal 80 (452 aa).

Residues 1-82 (MAYRSCVVGF…DPAVQQQKNQ (82 aa)) are head. A Phosphoserine modification is found at Ser45. Residues 82-118 (QEKEEMKVLNDKFASLIGKVQALEQRNQLLETRWGFL) are coil 1A. Residues 83–394 (EKEEMKVLND…KLMEGEESRM (312 aa)) enclose the IF rod domain. The interval 119-135 (QGQGSATFDLSHHYETF) is linker 1. Positions 136–227 (QGRLQEELRK…TVYEQELKDL (92 aa)) are coil 1B. A linker 12 region spans residues 228–251 (TAQVKDVSVTVGLDSRCHIDLSGI). A coil 2 region spans residues 252-390 (VEEVKAQYDA…ATYHKLMEGE (139 aa)). Residues 391 to 452 (ESRMDLPSTT…YLSQESEASE (62 aa)) are tail. Composition is skewed to polar residues over residues 411–421 (TTASKSGLSKT) and 443–452 (YLSQESEASE). Residues 411-452 (TTASKSGLSKTPSRKKKNRGGPVIKITEMSEKYLSQESEASE) are disordered.

It belongs to the intermediate filament family. In terms of assembly, heterotetramer of two type I and two type II keratins.

The chain is Keratin, type II cytoskeletal 80 (Krt80) from Rattus norvegicus (Rat).